Here is a 253-residue protein sequence, read N- to C-terminus: MADSGSDAPISNRPEEEVTVEKTPEMEAAAEEERLRYLEFVQQAAAQVLVLAAAAYAYAKQGAGPLRPGVDHVEGTVKAVVGPVYDRFHGVPLDLLKFLDRKVGESVQELDRRVPPVVKEAPGLARSAAAEVRQAGLVGTATGLAKSAIARAEPRARDLYTRYEPVAERKAAEAWAALNRLPLVPSVTRAVLPAAASLSARYNTAVADGAKRGSAVATYLPLVPTERLSRVFGYPLADAATSPAPEMQPIPSQ.

Residues Met-1 to Met-26 are disordered. Positions Arg-13 to Met-26 are enriched in basic and acidic residues.

It belongs to the REF/SRPP family.

The chain is REF/SRPP-like protein Os05g0151300/LOC_Os05g05940 from Oryza sativa subsp. japonica (Rice).